The chain runs to 230 residues: Urease accessory protein UreF (230 aa).

It belongs to the UreF family. As to quaternary structure, ureD, UreF and UreG form a complex that acts as a GTP-hydrolysis-dependent molecular chaperone, activating the urease apoprotein by helping to assemble the nickel containing metallocenter of UreC. The UreE protein probably delivers the nickel.

It is found in the cytoplasm. Its function is as follows. Required for maturation of urease via the functional incorporation of the urease nickel metallocenter. The protein is Urease accessory protein UreF of Polynucleobacter asymbioticus (strain DSM 18221 / CIP 109841 / QLW-P1DMWA-1) (Polynucleobacter necessarius subsp. asymbioticus).